We begin with the raw amino-acid sequence, 1859 residues long: Protein TIC 214 (1859 aa).

The next 6 membrane-spanning stretches (helical) occupy residues 18–38 (IINS…FSIG), 64–84 (FITG…HLAL), 87–107 (PHTI…WNNH), 124–144 (LSIQ…HFIL), 172–192 (VGWL…LFWI), and 221–241 (IFSI…PAPI). The tract at residues 247–314 (KETSKTEERG…TEEIRVNGKE (68 aa)) is disordered. Acidic residues predominate over residues 256–268 (GESEEERDVEIET). The span at 273–284 (KGTKQEQERSTE) shows a compositional bias: basic and acidic residues. Over residues 295–306 (EKEDPDKIDETE) the composition is skewed to acidic residues.

It belongs to the TIC214 family. In terms of assembly, part of the Tic complex.

It is found in the plastid. It localises to the chloroplast inner membrane. In terms of biological role, involved in protein precursor import into chloroplasts. May be part of an intermediate translocation complex acting as a protein-conducting channel at the inner envelope. The chain is Protein TIC 214 from Buxus microphylla (Littleleaf boxwood).